The chain runs to 102 residues: NADH-quinone oxidoreductase subunit K (102 aa).

Helical transmembrane passes span 6–26 (MEHG…GLLI), 30–50 (LLFI…AFVV), and 65–85 (ILVI…LLLL).

It belongs to the complex I subunit 4L family. As to quaternary structure, NDH-1 is composed of 14 different subunits. Subunits NuoA, H, J, K, L, M, N constitute the membrane sector of the complex.

It localises to the cell inner membrane. The catalysed reaction is a quinone + NADH + 5 H(+)(in) = a quinol + NAD(+) + 4 H(+)(out). Functionally, NDH-1 shuttles electrons from NADH, via FMN and iron-sulfur (Fe-S) centers, to quinones in the respiratory chain. The immediate electron acceptor for the enzyme in this species is believed to be ubiquinone. Couples the redox reaction to proton translocation (for every two electrons transferred, four hydrogen ions are translocated across the cytoplasmic membrane), and thus conserves the redox energy in a proton gradient. The protein is NADH-quinone oxidoreductase subunit K of Aeromonas hydrophila subsp. hydrophila (strain ATCC 7966 / DSM 30187 / BCRC 13018 / CCUG 14551 / JCM 1027 / KCTC 2358 / NCIMB 9240 / NCTC 8049).